A 104-amino-acid chain; its full sequence is Large ribosomal subunit protein uL23 (104 aa).

This sequence belongs to the universal ribosomal protein uL23 family. In terms of assembly, part of the 50S ribosomal subunit. Contacts protein L29, and trigger factor when it is bound to the ribosome.

Functionally, one of the early assembly proteins it binds 23S rRNA. One of the proteins that surrounds the polypeptide exit tunnel on the outside of the ribosome. Forms the main docking site for trigger factor binding to the ribosome. The sequence is that of Large ribosomal subunit protein uL23 from Rhodospirillum rubrum (strain ATCC 11170 / ATH 1.1.1 / DSM 467 / LMG 4362 / NCIMB 8255 / S1).